A 354-amino-acid chain; its full sequence is DNA-binding protein EMBP-1 (354 aa).

Disordered regions lie at residues 1–24, 106–193, and 230–273; these read MASS…TPAQ, SAAG…RSAS, and EVNA…RKQQ. Composition is skewed to low complexity over residues 127 to 140 and 232 to 245; these read SSSG…QGSS and NAAA…SLSQ. The segment covering 246 to 265 has biased composition (basic and acidic residues); it reads MDERELKRERRKQSNRESAR. The 64-residue stretch at 250–313 folds into the bZIP domain; sequence ELKRERRKQS…KTMETENKKL (64 aa). Residues 252-271 form a basic motif region; it reads KRERRKQSNRESARRSRLRK. Residues 278–299 are leucine-zipper; that stretch reads LAQKVSELTAANGTLRSELDQL.

The protein belongs to the bZIP family. As to quaternary structure, heterodimer.

It localises to the nucleus. Interacts specifically with the 8-bp sequence 5'-CACGTGGC-3'in the abscisic acid response element (ABARE). Also binds to the hexamer motif 5'-ACGTCA-3' of histone gene promoters. The protein is DNA-binding protein EMBP-1 of Triticum aestivum (Wheat).